The chain runs to 465 residues: Ribulose bisphosphate carboxylase large chain (465 aa).

N6,N6,N6-trimethyllysine is present on Lys4. Substrate is bound by residues Asn113 and Thr163. The active-site Proton acceptor is the Lys165. Residue Lys167 participates in substrate binding. Lys191, Asp193, and Glu194 together coordinate Mg(2+). An N6-carboxylysine modification is found at Lys191. Catalysis depends on His284, which acts as the Proton acceptor. Residues Arg285, His317, and Ser369 each contribute to the substrate site.

This sequence belongs to the RuBisCO large chain family. Type I subfamily. Heterohexadecamer of 8 large chains and 8 small chains; disulfide-linked. The disulfide link is formed within the large subunit homodimers. The cofactor is Mg(2+). Post-translationally, the disulfide bond which can form in the large chain dimeric partners within the hexadecamer appears to be associated with oxidative stress and protein turnover.

The protein resides in the plastid. It is found in the chloroplast. The catalysed reaction is 2 (2R)-3-phosphoglycerate + 2 H(+) = D-ribulose 1,5-bisphosphate + CO2 + H2O. It catalyses the reaction D-ribulose 1,5-bisphosphate + O2 = 2-phosphoglycolate + (2R)-3-phosphoglycerate + 2 H(+). Its function is as follows. RuBisCO catalyzes two reactions: the carboxylation of D-ribulose 1,5-bisphosphate, the primary event in carbon dioxide fixation, as well as the oxidative fragmentation of the pentose substrate in the photorespiration process. Both reactions occur simultaneously and in competition at the same active site. The polypeptide is Ribulose bisphosphate carboxylase large chain (Nepenthes alata (Winged pitcher plant)).